Reading from the N-terminus, the 487-residue chain is N-succinylglutamate 5-semialdehyde dehydrogenase (487 aa).

An NAD(+)-binding site is contributed by 221–226 (GSSRTG). Residues Glu-244 and Cys-278 contribute to the active site.

This sequence belongs to the aldehyde dehydrogenase family. AstD subfamily.

The enzyme catalyses N-succinyl-L-glutamate 5-semialdehyde + NAD(+) + H2O = N-succinyl-L-glutamate + NADH + 2 H(+). It functions in the pathway amino-acid degradation; L-arginine degradation via AST pathway; L-glutamate and succinate from L-arginine: step 4/5. Its function is as follows. Catalyzes the NAD-dependent reduction of succinylglutamate semialdehyde into succinylglutamate. The polypeptide is N-succinylglutamate 5-semialdehyde dehydrogenase (Pseudomonas putida (strain ATCC 700007 / DSM 6899 / JCM 31910 / BCRC 17059 / LMG 24140 / F1)).